The primary structure comprises 353 residues: Sesquiterpene synthase Agr8 (353 aa).

Residues D82, N220, S224, and E228 each contribute to the Mg(2+) site. Positions 82–86 (DEYTD) match the DDXXD motif motif. (2E,6E)-farnesyl diphosphate is bound by residues R309 and Y310.

It belongs to the terpene synthase family. Mg(2+) is required as a cofactor.

The enzyme catalyses (2E,6E)-farnesyl diphosphate = gamma-muurolene + diphosphate. It carries out the reaction (2E,6E)-farnesyl diphosphate = alpha-selinene + diphosphate. The catalysed reaction is (2E,6E)-farnesyl diphosphate = delta-cadinene + diphosphate. Its function is as follows. Terpene cyclase that catalyzes the cyclization of farnesyl diphosphate (FPP) to various sesquiterpenes, including beta-elemene, gamma-muurolene, alpha-selinene, beta-selinene, beta-cadinene, delta-cadinene and alpha-cadinol. This is Sesquiterpene synthase Agr8 from Cyclocybe aegerita (Black poplar mushroom).